Consider the following 273-residue polypeptide: Large ribosomal subunit protein uL2cz/uL2cy (273 aa).

Disordered regions lie at residues 1 to 23 (MAIHLYKTSTPSTRNGAVDSQVK) and 224 to 273 (NPVD…RRRK).

The protein belongs to the universal ribosomal protein uL2 family. In terms of assembly, part of the 50S ribosomal subunit.

It localises to the plastid. Its subcellular location is the chloroplast. The sequence is that of Large ribosomal subunit protein uL2cz/uL2cy (rpl2-A) from Amborella trichopoda.